The following is a 205-amino-acid chain: Ribosome maturation factor RimP (205 aa).

The protein belongs to the RimP family.

It localises to the cytoplasm. Required for maturation of 30S ribosomal subunits. The protein is Ribosome maturation factor RimP of Sinorhizobium fredii (strain NBRC 101917 / NGR234).